We begin with the raw amino-acid sequence, 319 residues long: ATP-dependent 6-phosphofructokinase (319 aa).

G11 is a binding site for ATP. 21-25 is an ADP binding site; it reads RAVVR. ATP is bound by residues 72–73 and 102–105; these read RC and GDGS. D103 contacts Mg(2+). 125-127 serves as a coordination point for substrate; sequence TID. The active-site Proton acceptor is the D127. R154 is an ADP binding site. Residues R162 and 169 to 171 each bind substrate; that span reads MGR. ADP-binding positions include 185-187, R211, and 213-215; these read GAE and KLH. Substrate-binding positions include E222, R243, and 249–252; that span reads HIQR.

It belongs to the phosphofructokinase type A (PFKA) family. ATP-dependent PFK group I subfamily. Prokaryotic clade 'B1' sub-subfamily. In terms of assembly, homotetramer. It depends on Mg(2+) as a cofactor.

The protein resides in the cytoplasm. The catalysed reaction is beta-D-fructose 6-phosphate + ATP = beta-D-fructose 1,6-bisphosphate + ADP + H(+). It participates in carbohydrate degradation; glycolysis; D-glyceraldehyde 3-phosphate and glycerone phosphate from D-glucose: step 3/4. Its activity is regulated as follows. Allosterically activated by ADP and other diphosphonucleosides, and allosterically inhibited by phosphoenolpyruvate. Functionally, catalyzes the phosphorylation of D-fructose 6-phosphate to fructose 1,6-bisphosphate by ATP, the first committing step of glycolysis. The sequence is that of ATP-dependent 6-phosphofructokinase from Alkaliphilus metalliredigens (strain QYMF).